A 144-amino-acid chain; its full sequence is DNA-directed RNA polymerases II and V subunit 6B (144 aa).

Acidic residues predominate over residues 1–32 (MADDDYNEVDDLGYEDEPAEPEIEEGVEEDAD). The tract at residues 1–62 (MADDDYNEVD…EPVQRPRKTS (62 aa)) is disordered. Basic and acidic residues predominate over residues 46 to 56 (TEDKVETEPVQ).

This sequence belongs to the archaeal Rpo6/eukaryotic RPB6 RNA polymerase subunit family. In terms of assembly, component of the RNA polymerase II and V complexes.

It localises to the nucleus. In terms of biological role, DNA-dependent RNA polymerase catalyzes the transcription of DNA into RNA using the four ribonucleoside triphosphates as substrates. Component of RNA polymerase II which synthesizes mRNA precursors and many functional non-coding RNAs. Pol II is the central component of the basal RNA polymerase II transcription machinery. It is composed of mobile elements that move relative to each other. Component of RNA polymerase V which mediates RNA-directed DNA methylation-dependent (RdDM) transcriptional gene silencing (TGS) of endogenous repeated sequences, including transposable elements. The protein is DNA-directed RNA polymerases II and V subunit 6B (NRPB6B) of Arabidopsis thaliana (Mouse-ear cress).